The sequence spans 491 residues: Probable succinate-semialdehyde dehydrogenase [NADP(+)] (491 aa).

NADP(+) contacts are provided by residues 163–164, 187–190, and 241–242; these read WN, KPAE, and GS. The active-site Proton acceptor is the Glu-263. Leu-264 serves as a coordination point for NADP(+). The Nucleophile role is filled by Cys-297. Glu-394 contributes to the NADP(+) binding site.

This sequence belongs to the aldehyde dehydrogenase family.

The catalysed reaction is succinate semialdehyde + NADP(+) + H2O = succinate + NADPH + 2 H(+). It participates in amino-acid degradation; 4-aminobutanoate degradation. In terms of biological role, catalyzes the NADP(+) dependent oxidation of succinate semialdehyde to succinate. The chain is Probable succinate-semialdehyde dehydrogenase [NADP(+)] (gabD) from Sinorhizobium fredii (strain NBRC 101917 / NGR234).